The chain runs to 352 residues: Sulfate-binding protein (352 aa).

Residues 1-40 form the signal peptide; the sequence is MARSAFGWGFSVIAVLMVGSITACNTTTTTEPGQGENASQ.

This sequence belongs to the prokaryotic sulfate-binding protein family.

It is found in the periplasm. In terms of biological role, this protein specifically binds sulfate and is involved in its transmembrane transport. In Synechocystis sp. (strain ATCC 27184 / PCC 6803 / Kazusa), this protein is Sulfate-binding protein (sbpA).